The sequence spans 328 residues: Malate dehydrogenase (328 aa).

Position 12 to 18 (12 to 18 (GAAGQIG)) interacts with NAD(+). Substrate contacts are provided by arginine 95 and arginine 101. NAD(+) is bound by residues asparagine 108, glutamine 115, and 132–134 (VGN). 2 residues coordinate substrate: asparagine 134 and arginine 165. Histidine 190 serves as the catalytic Proton acceptor.

The protein belongs to the LDH/MDH superfamily. MDH type 2 family.

The enzyme catalyses (S)-malate + NAD(+) = oxaloacetate + NADH + H(+). Catalyzes the reversible oxidation of malate to oxaloacetate. The chain is Malate dehydrogenase from Acidovorax ebreus (strain TPSY) (Diaphorobacter sp. (strain TPSY)).